The chain runs to 690 residues: DNA ligase (690 aa).

NAD(+) contacts are provided by residues 36 to 40 (DSVYD), 85 to 86 (SL), and E124. K126 (N6-AMP-lysine intermediate) is an active-site residue. Residues R147, E184, K308, and K332 each coordinate NAD(+). 4 residues coordinate Zn(2+): C426, C429, C444, and C449. In terms of domain architecture, BRCT spans 614–690 (NQSNVFDGKS…INENELKLLL (77 aa)).

It belongs to the NAD-dependent DNA ligase family. LigA subfamily. Mg(2+) serves as cofactor. Requires Mn(2+) as cofactor.

It catalyses the reaction NAD(+) + (deoxyribonucleotide)n-3'-hydroxyl + 5'-phospho-(deoxyribonucleotide)m = (deoxyribonucleotide)n+m + AMP + beta-nicotinamide D-nucleotide.. Its function is as follows. DNA ligase that catalyzes the formation of phosphodiester linkages between 5'-phosphoryl and 3'-hydroxyl groups in double-stranded DNA using NAD as a coenzyme and as the energy source for the reaction. It is essential for DNA replication and repair of damaged DNA. This chain is DNA ligase, found in Prochlorococcus marinus (strain NATL2A).